The chain runs to 238 residues: Uridylate kinase (238 aa).

12–15 contributes to the ATP binding site; it reads KLSG. Glycine 54 provides a ligand contact to UMP. Residues glycine 55 and arginine 59 each contribute to the ATP site. UMP contacts are provided by residues aspartate 74 and 135 to 142; that span reads TGNPYFTT. Residues threonine 162, asparagine 163, tyrosine 168, and aspartate 171 each contribute to the ATP site.

This sequence belongs to the UMP kinase family. As to quaternary structure, homohexamer.

The protein resides in the cytoplasm. The enzyme catalyses UMP + ATP = UDP + ADP. Its pathway is pyrimidine metabolism; CTP biosynthesis via de novo pathway; UDP from UMP (UMPK route): step 1/1. Its activity is regulated as follows. Inhibited by UTP. Functionally, catalyzes the reversible phosphorylation of UMP to UDP. The protein is Uridylate kinase of Nitrobacter hamburgensis (strain DSM 10229 / NCIMB 13809 / X14).